The sequence spans 358 residues: Protein-glutamate methylesterase/protein-glutamine glutaminase 3 (358 aa).

The region spanning 2-118 (KILVVDDSAL…CGRLQEVAPL (117 aa)) is the Response regulatory domain. Aspartate 52 is modified (4-aspartylphosphate). The CheB-type methylesterase domain maps to 155 to 325 (NNEDHQLAIM…VPSMPEALLK (171 aa)). Active-site residues include serine 167, histidine 194, and aspartate 291.

The protein belongs to the CheB family. In terms of processing, phosphorylated by CheA. Phosphorylation of the N-terminal regulatory domain activates the methylesterase activity.

Its subcellular location is the cytoplasm. It catalyses the reaction [protein]-L-glutamate 5-O-methyl ester + H2O = L-glutamyl-[protein] + methanol + H(+). The enzyme catalyses L-glutaminyl-[protein] + H2O = L-glutamyl-[protein] + NH4(+). Its function is as follows. Involved in chemotaxis. Part of a chemotaxis signal transduction system that modulates chemotaxis in response to various stimuli. Catalyzes the demethylation of specific methylglutamate residues introduced into the chemoreceptors (methyl-accepting chemotaxis proteins or MCP) by CheR. Also mediates the irreversible deamidation of specific glutamine residues to glutamic acid. The chain is Protein-glutamate methylesterase/protein-glutamine glutaminase 3 from Vibrio cholerae serotype O1 (strain ATCC 39315 / El Tor Inaba N16961).